The sequence spans 119 residues: Large ribosomal subunit protein uL18 (119 aa).

Belongs to the universal ribosomal protein uL18 family. In terms of assembly, part of the 50S ribosomal subunit; part of the 5S rRNA/L5/L18/L25 subcomplex. Contacts the 5S and 23S rRNAs.

This is one of the proteins that bind and probably mediate the attachment of the 5S RNA into the large ribosomal subunit, where it forms part of the central protuberance. This Chlorobium luteolum (strain DSM 273 / BCRC 81028 / 2530) (Pelodictyon luteolum) protein is Large ribosomal subunit protein uL18.